We begin with the raw amino-acid sequence, 435 residues long: tRNA modification GTPase MnmE (435 aa).

(6S)-5-formyl-5,6,7,8-tetrahydrofolate is bound by residues R20, E77, and K117. The TrmE-type G domain maps to 214–359 (GLKIVIAGAP…FIKKLESFCH (146 aa)). Residues 224–229 (NSGKSS), 243–249 (TEEAGTT), and 268–271 (DTAG) contribute to the GTP site. Residues S228 and T249 each coordinate Mg(2+). Residue K435 participates in (6S)-5-formyl-5,6,7,8-tetrahydrofolate binding.

The protein belongs to the TRAFAC class TrmE-Era-EngA-EngB-Septin-like GTPase superfamily. TrmE GTPase family. Homodimer. Heterotetramer of two MnmE and two MnmG subunits. It depends on K(+) as a cofactor.

It localises to the cytoplasm. Its function is as follows. Exhibits a very high intrinsic GTPase hydrolysis rate. Involved in the addition of a carboxymethylaminomethyl (cmnm) group at the wobble position (U34) of certain tRNAs, forming tRNA-cmnm(5)s(2)U34. The chain is tRNA modification GTPase MnmE from Bartonella tribocorum (strain CIP 105476 / IBS 506).